The primary structure comprises 200 residues: NAD(P)H-dependent FMN reductase C4B3.06c (200 aa).

Residues Arg22, 96 to 99, and Tyr126 contribute to the FMN site; that span reads QYNG.

In terms of assembly, homodimer.

Its subcellular location is the cytoplasm. It is found in the nucleus. The catalysed reaction is FMNH2 + NADP(+) = FMN + NADPH + 2 H(+). It catalyses the reaction FMNH2 + NAD(+) = FMN + NADH + 2 H(+). Has several reductase activities that are NAD(P)H-dependent and involve FMN as a cofactor. May be involved in ferric iron assimilation. This Schizosaccharomyces pombe (strain 972 / ATCC 24843) (Fission yeast) protein is NAD(P)H-dependent FMN reductase C4B3.06c.